The sequence spans 155 residues: Small ribosomal subunit protein uS7cz/uS7cy (155 aa).

This sequence belongs to the universal ribosomal protein uS7 family. Part of the 30S ribosomal subunit.

The protein localises to the plastid. It is found in the chloroplast. Functionally, one of the primary rRNA binding proteins, it binds directly to 16S rRNA where it nucleates assembly of the head domain of the 30S subunit. This is Small ribosomal subunit protein uS7cz/uS7cy (rps7-A) from Coffea arabica (Arabian coffee).